The primary structure comprises 335 residues: Acetyl-coenzyme A carboxylase carboxyl transferase subunit alpha (335 aa).

The region spanning 48-308 (TLELKVDALR…KEILIEELKA (261 aa)) is the CoA carboxyltransferase C-terminal domain.

Belongs to the AccA family. Acetyl-CoA carboxylase is a heterohexamer composed of biotin carboxyl carrier protein (AccB), biotin carboxylase (AccC) and two subunits each of ACCase subunit alpha (AccA) and ACCase subunit beta (AccD).

The protein localises to the cytoplasm. The enzyme catalyses N(6)-carboxybiotinyl-L-lysyl-[protein] + acetyl-CoA = N(6)-biotinyl-L-lysyl-[protein] + malonyl-CoA. The protein operates within lipid metabolism; malonyl-CoA biosynthesis; malonyl-CoA from acetyl-CoA: step 1/1. In terms of biological role, component of the acetyl coenzyme A carboxylase (ACC) complex. First, biotin carboxylase catalyzes the carboxylation of biotin on its carrier protein (BCCP) and then the CO(2) group is transferred by the carboxyltransferase to acetyl-CoA to form malonyl-CoA. The chain is Acetyl-coenzyme A carboxylase carboxyl transferase subunit alpha from Pelodictyon phaeoclathratiforme (strain DSM 5477 / BU-1).